The chain runs to 437 residues: tRNA(Ile)-lysidine synthase (437 aa).

An ATP-binding site is contributed by 22 to 27; that stretch reads SGGLDS.

Belongs to the tRNA(Ile)-lysidine synthase family.

It localises to the cytoplasm. It carries out the reaction cytidine(34) in tRNA(Ile2) + L-lysine + ATP = lysidine(34) in tRNA(Ile2) + AMP + diphosphate + H(+). Ligates lysine onto the cytidine present at position 34 of the AUA codon-specific tRNA(Ile) that contains the anticodon CAU, in an ATP-dependent manner. Cytidine is converted to lysidine, thus changing the amino acid specificity of the tRNA from methionine to isoleucine. The sequence is that of tRNA(Ile)-lysidine synthase from Xylella fastidiosa (strain Temecula1 / ATCC 700964).